We begin with the raw amino-acid sequence, 79 residues long: Ferredoxin (79 aa).

4Fe-4S ferredoxin-type domains lie at 2-30 (PHVICEPCIGVKDQSCVEVCPVECIYDGG) and 31-60 (DQFYIHPEECIDCGACVPACPVNAIYPEED). [3Fe-4S] cluster contacts are provided by C9 and C17. [4Fe-4S] cluster is bound by residues C21, C40, C43, and C46. C50 serves as a coordination point for [3Fe-4S] cluster.

It depends on [4Fe-4S] cluster as a cofactor. [3Fe-4S] cluster is required as a cofactor.

Its function is as follows. Ferredoxins are iron-sulfur proteins that transfer electrons in a wide variety of metabolic reactions. This Thermus thermophilus (strain ATCC 27634 / DSM 579 / HB8) protein is Ferredoxin.